The sequence spans 1577 residues: MHFLFFFANRQFLSLKCPQAEFVWIPHPVHGYITGKFIQEDYGGTSYCQTEEGESLSVACAPSQLAKVAKSVLDKSVDDLVQMDDINEAMIVHNLRKRFKNDQIYTNIGTILISVNPFKRLPLYTPTVMDQYMHKVPKEMPPHTYNIADDAYRAMIDNRMNQSILISGESGAGKTECTKQCLTYFAELAGSTNGVEQNILLANPILESFGNAKTLRNNSSRFGKWVEIHFDQKGSICGASTINHLLEKSRVVYQIKGERNFRIVATELVKAPPRSRGGGGSSPARPESFKFLSQSGCIDVEGVDDVKEFEERVLCHGQARVRVQFSEDDINNCMELISAILHLGNFEFVSGQGKNVETSTVANREEVKIVATLLKVDPATLEQNVTSKLMEIKGCDPTRIPLTPVQATDATNALAKAIYSKLFDWLVKKINESMEPQKGAKTTTIGVLDIFGFEIFDKNSFEQLCINFTNEKLQQHFNQYTFKLEEKLYQSEEVKYEHITFIDNQPVLDLIEKKQPQGLMLVLDEQISIPKSSDATFFIKANQTQAARSTQLRGGEDSRTDFIIKHYAGDVIYDSTGMLEKNKDTLQKDLLVLSESSKQKLMKLLFPPSEGDQKTSKVTLGGQFRKQLDSLMTALNATEPHYIRCIKPNSEKQADLFHGFMSLQQLRYAGVFEAVRIRQTGYPFRYSHENFLKRYGFLVKDIHKRYGPNLKQNCDLLLKSMKGDCXSKVQVGKTRVLYRAPEQRGLELQRNIAVERVTIQIQAGVRRMFARRLYKRMRAIKPVLLNAIKSRSLSVLEQAIDAAKDIEFDMKLIRDCKELRSVILKEMEITKKLTDYIGAPPNHKTYLQVEPLYAQLCAVLTEAESINYSTPLVETGQQIKYMIAQRVETREQLKQAVDGAVRVDLEAAIARAEQIGLEESEPTLAAGRQELQRIYREEELVAELLNALAVGMAMRTSETTWDHAAIDAHTLGSAIYAAESFGFRTEQGRLTLDEAKVIVEVRQHLAADDYESLSMTLKKATTTLNKNSMSQSTKTEIDEAYEELSHNTAVNDLIEKVVQAIQDHDQEMLDYGVQQADSLRITDRPEMMQATELLNRIVNARALLREGITNVDQAQLETALADAASFAYTREEVPTAQQLLDRIYVINHDADVGLYYMEKEPLERAWAGAQEINLKTAQIDEVRNVLANDEQKFIQEQLKTANRLGDQARAIRLNIKLKEIFFGQFGKMFVFEQFGGLRKPEDFAKAKLLGREALKLGMFKWTKSPIPTSLTTLDQLAVKSATRLFKNVLGFMGDRPLPYPNALAQDLLEQCLAAPELRNEVYCQIIKQLTENPSPQSVTKGWQLMRCCLQTFPPSEEFANCLEMFLAAKGKDDKYIEMLHDTQYGDKRTSAPNVEQILAAKQYVTRIDLNQSTQVDTSVVPQGFVPEKLIADDTEGVIRAGSRPAQARAQPGQQAQPAGAARQQAAAPVQAAAATASYDYGQQQQQQQQGYDQQQQAYGGGADYGQQQQQQDLPAEPTEEYKQVEVVYDYDGGGDAQRLVLVKGAIITVIKEYEGWAYGSTDDGQVGLYPINYTRPI.

Positions Lys75 to Asn751 constitute a Myosin motor domain. Lys119 carries the post-translational modification N6,N6,N6-trimethyllysine. Gly168–Thr175 is an ATP binding site. Actin-binding regions lie at residues Leu628–Ser650 and Gln730–Arg744. Positions Glu755–Pro782 constitute an IQ domain. The region spanning Trp1261 to Lys1401 is the MyTH4 domain. Disordered stretches follow at residues Ser1442–Ala1466 and Gln1483–Glu1516. Low complexity-rich tracts occupy residues Pro1444–Ala1466 and Gln1483–Ala1497. The 59-residue stretch at Glu1519–Ile1577 folds into the SH3 domain.

The protein belongs to the TRAFAC class myosin-kinesin ATPase superfamily. Myosin family. In terms of assembly, myosin I heavy chain is single-headed.

This Acanthamoeba castellanii (Amoeba) protein is High molecular weight form of myosin-1.